We begin with the raw amino-acid sequence, 287 residues long: GDT1-like protein C17G8.08c (287 aa).

The next 7 helical transmembrane spans lie at 7–27 (WAII…GEGM), 50–70 (LIFS…FIVA), 89–109 (ALFI…LLFP), 112–132 (LTDI…LMEA), 194–214 (VMAT…FVSE), 232–252 (VYGV…LAVI), and 267–287 (MFIG…QGFF).

This sequence belongs to the GDT1 family.

It localises to the membrane. The polypeptide is GDT1-like protein C17G8.08c (Schizosaccharomyces pombe (strain 972 / ATCC 24843) (Fission yeast)).